Reading from the N-terminus, the 249-residue chain is ATP synthase subunit a (249 aa).

A run of 6 helical transmembrane segments spans residues 30–50 (QSPVMMIVASVLVLAFLYVGM), 86–106 (FFPFIFTLFFFILAGNYLGLL), 115–135 (HIAVTLALALLVFVLAVIVSL), 142–162 (FFAHFMPAGAPVALAPLLVPI), 191–211 (MFAAFTIMLAGLGLFGDVLAV), and 218–238 (VALMALELLVGALQAYVFAIL).

Belongs to the ATPase A chain family. F-type ATPases have 2 components, CF(1) - the catalytic core - and CF(0) - the membrane proton channel. CF(1) has five subunits: alpha(3), beta(3), gamma(1), delta(1), epsilon(1). CF(0) has three main subunits: a(1), b(2) and c(9-12). The alpha and beta chains form an alternating ring which encloses part of the gamma chain. CF(1) is attached to CF(0) by a central stalk formed by the gamma and epsilon chains, while a peripheral stalk is formed by the delta and b chains.

The protein resides in the cell inner membrane. In terms of biological role, key component of the proton channel; it plays a direct role in the translocation of protons across the membrane. In Gluconacetobacter diazotrophicus (strain ATCC 49037 / DSM 5601 / CCUG 37298 / CIP 103539 / LMG 7603 / PAl5), this protein is ATP synthase subunit a.